The sequence spans 1381 residues: Hepatocyte growth factor receptor (1381 aa).

Positions 1-24 are cleaved as a signal peptide; the sequence is MKAPAVLVPGILVLLFTLVQRSNG. Topologically, residues 25 to 932 are extracellular; the sequence is ECKEALAKSE…VIVQPDQNFT (908 aa). Residues 27 to 515 form the Sema domain; that stretch reads KEALAKSEMN…TGKKITKIPL (489 aa). A glycan (N-linked (GlcNAc...) asparagine) is linked at Asn-45. Intrachain disulfides connect Cys-95/Cys-101, Cys-98/Cys-160, Cys-133/Cys-141, and Cys-172/Cys-175. N-linked (GlcNAc...) asparagine glycosylation is present at Asn-106. Asn-149 is a glycosylation site (N-linked (GlcNAc...) asparagine). A glycan (N-linked (GlcNAc...) asparagine) is linked at Asn-202. Cystine bridges form between Cys-298/Cys-363 and Cys-385/Cys-397. N-linked (GlcNAc...) asparagine glycosylation is found at Asn-399 and Asn-405. 4 disulfides stabilise this stretch: Cys-520-Cys-538, Cys-526-Cys-561, Cys-529-Cys-545, and Cys-541-Cys-551. 3 consecutive IPT/TIG domains span residues 563-655, 657-739, and 742-836; these read PAIY…FSYV, PIIT…FSYR, and PIVY…LIYV. Residue Thr-582 is glycosylated (O-linked (Man) threonine). Residues Asn-607 and Asn-635 are each glycosylated (N-linked (GlcNAc...) asparagine). 2 O-linked (Man) threonine glycosylation sites follow: Thr-676 and Thr-761. Asn-785, Asn-879, and Asn-930 each carry an N-linked (GlcNAc...) asparagine glycan. Residues 933–955 traverse the membrane as a helical segment; it reads GLIAGVVSISIALLLLLGLFLWL. Over 956 to 1381 the chain is Cytoplasmic; sequence KKRKQIKDLG…EDNADDEVDT (426 aa). Ser-966 carries the post-translational modification Phosphoserine. Thr-977 bears the Phosphothreonine mark. A phosphoserine mark is found at Ser-990, Ser-997, and Ser-1000. Position 1003 is a phosphotyrosine (Tyr-1003). In terms of domain architecture, Protein kinase spans 1078 to 1345; the sequence is VHFNEVIGRG…RISAIFSTFI (268 aa). Residues 1084 to 1092 and Lys-1110 each bind ATP; that span reads IGRGHFGCV. Asp-1204 functions as the Proton acceptor in the catalytic mechanism. Residues 1212–1381 form an interaction with RANBP9 region; the sequence is LDEKFTVKVA…EDNADDEVDT (170 aa). At Tyr-1230 the chain carries Phosphotyrosine. Phosphotyrosine; by autocatalysis occurs at positions 1234 and 1235. Thr-1289 is subject to Phosphothreonine. The tract at residues 1320-1359 is interaction with MUC20; it reads WHPKAEMRPSFSELVSRISAIFSTFIGEHYVHVNATYVNV. Residues Tyr-1349 and Tyr-1356 each carry the phosphotyrosine; by autocatalysis modification. Residue Tyr-1365 is modified to Phosphotyrosine.

It belongs to the protein kinase superfamily. Tyr protein kinase family. Heterodimer made of an alpha chain (50 kDa) and a beta chain (145 kDa) which are disulfide linked. Binds PLXNB1. Interacts when phosphorylated with downstream effectors including STAT3, PIK3R1, SRC, PCLG1, GRB2 and GAB1. Interacts with SPSB1, SPSB2 and SPSB4. Interacts with INPP5D/SHIP1. When phosphorylated at Tyr-1356, interacts with INPPL1/SHIP2. Interacts with RANBP9 and RANBP10, as well as SPSB1, SPSB2, SPSB3 and SPSB4. SPSB1 binding occurs in the presence and in the absence of HGF, however HGF treatment has a positive effect on this interaction. Interacts with MUC20; prevents interaction with GRB2 and suppresses hepatocyte growth factor-induced cell proliferation. Interacts with GRB10. Interacts with PTPN1 and PTPN2. Interacts with HSP90AA1 and HSP90AB1; the interaction suppresses MET kinase activity. Interacts with tensin TNS3. Interacts (when phosphorylated) with tensin TNS4 (via SH2 domain); the interaction increases MET protein stability by inhibiting MET endocytosis and subsequent lysosomal degradation. In terms of processing, autophosphorylated in response to ligand binding on Tyr-1234 and Tyr-1235 in the kinase domain leading to further phosphorylation of Tyr-1349 and Tyr-1356 in the C-terminal multifunctional docking site. Dephosphorylated by PTPRJ at Tyr-1349 and Tyr-1365. Dephosphorylated by PTPN1 and PTPN2. Ubiquitinated. Ubiquitination by CBL regulates the receptor stability and activity through proteasomal degradation. Post-translationally, O-mannosylation of IPT/TIG domains by TMEM260 is required for protein maturation. O-mannosylated residues are composed of single mannose glycans that are not elongated or modified.

It is found in the membrane. The enzyme catalyses L-tyrosyl-[protein] + ATP = O-phospho-L-tyrosyl-[protein] + ADP + H(+). Its activity is regulated as follows. In its inactive state, the C-terminal tail interacts with the catalytic domain and inhibits the kinase activity. Upon ligand binding, the C-terminal tail is displaced and becomes phosphorylated, thus increasing the kinase activity. Functionally, receptor tyrosine kinase that transduces signals from the extracellular matrix into the cytoplasm by binding to hepatocyte growth factor/HGF ligand. Regulates many physiological processes including proliferation, scattering, morphogenesis and survival. Ligand binding at the cell surface induces autophosphorylation of MET on its intracellular domain that provides docking sites for downstream signaling molecules. Following activation by ligand, interacts with the PI3-kinase subunit PIK3R1, PLCG1, SRC, GRB2, STAT3 or the adapter GAB1. Recruitment of these downstream effectors by MET leads to the activation of several signaling cascades including the RAS-ERK, PI3 kinase-AKT, or PLCgamma-PKC. The RAS-ERK activation is associated with the morphogenetic effects while PI3K/AKT coordinates prosurvival effects. During embryonic development, MET signaling plays a role in gastrulation, development and migration of muscles and neuronal precursors, angiogenesis and kidney formation. In adults, participates in wound healing as well as organ regeneration and tissue remodeling. Also promotes differentiation and proliferation of hematopoietic cells. The protein is Hepatocyte growth factor receptor (MET) of Papio anubis (Olive baboon).